We begin with the raw amino-acid sequence, 243 residues long: Transcription factor TFIIS homolog (243 aa).

The TFIIS central domain maps to 77-201 (MRDIIQMMFF…SQQKVAEKTS (125 aa)). Residues 202–242 (QLYKCPNCKQRMCTYREVQTRALDEPSTIFCTCKKCGHEFI) form a TFIIS-type zinc finger. 4 residues coordinate Zn(2+): Cys206, Cys209, Cys234, and Cys237.

The protein belongs to the TFS-II family.

Functionally, putative initiation factor. Necessary for efficient transcription elongation past template-encoded arresting sites. The protein is Transcription factor TFIIS homolog of Ornithodoros (relapsing fever ticks).